The chain runs to 196 residues: Heat shock protein beta-8 (196 aa).

A phosphoserine mark is found at serine 24 and serine 57. At threonine 63 the chain carries Phosphothreonine; by PKC; in vitro. Arginine 71 and arginine 78 each carry asymmetric dimethylarginine. A sHSP domain is found at 74–185 (TATARFGVPA…TFGESSFNNE (112 aa)). Residues 176–196 (TFGESSFNNELPQDSQEVTCT) are disordered. A compositionally biased stretch (polar residues) spans 177–196 (FGESSFNNELPQDSQEVTCT).

Belongs to the small heat shock protein (HSP20) family. As to quaternary structure, monomer. Forms a ternary complex with BAG3 and HSPA1A. Component of the chaperone-assisted selective autophagy (CASA) complex consisting of BAG3, HSPA8/HSC70, HSPB8 and STUB1/CHIP. Interacts with HSPB1. Interacts with DNAJB6. Interacts with BAG3. Predominantly expressed in skeletal muscle and heart.

It localises to the cytoplasm. The protein resides in the nucleus. In terms of biological role, involved in the chaperone-assisted selective autophagy (CASA), a crucial process for protein quality control, particularly in mechanical strained cells and tissues such as muscle. Displays temperature-dependent chaperone activity. The protein is Heat shock protein beta-8 (HSPB8) of Homo sapiens (Human).